The chain runs to 105 residues: Death-associated protein 1 homolog (105 aa).

A disordered region spans residues 75-105 (AAQVAHQKPVPSAQKLPAGQHLNQHIHQPRK). The segment covering 95 to 105 (HLNQHIHQPRK) has biased composition (polar residues).

This sequence belongs to the DAP-DAPL1 family. Associates with ribosomes; inhibiting translation. Interacts with eiF5a (eif5a and eif5a2); inhibiting translation.

In terms of biological role, ribosome-binding protein involved in ribosome hibernation, a process during which ribosomes are stabilized in an inactive state and preserved from proteasomal degradation. Acts via its association with eiF5a (eif5a and eif5a2) at the polypeptide exit tunnel of the ribosome, preventing mRNA translation. Involved in ribosome hibernation in the mature egg by preventing mRNA translation, leading to ribosome inactivation. Ribosomes, which are produced in large quantities during oogenesis, are stored and translationally repressed in the egg and early embryo. Compared to dap1b, binds and inactivates ribosomes less efficiently. The protein is Death-associated protein 1 homolog of Danio rerio (Zebrafish).